We begin with the raw amino-acid sequence, 229 residues long: Adapter protein MecA (229 aa).

Belongs to the MecA family. As to quaternary structure, homodimer.

Functionally, enables the recognition and targeting of unfolded and aggregated proteins to the ClpC protease or to other proteins involved in proteolysis. The polypeptide is Adapter protein MecA (Latilactobacillus sakei subsp. sakei (strain 23K) (Lactobacillus sakei subsp. sakei)).